The following is a 62-amino-acid chain: Short neurotoxin 3 (62 aa).

4 disulfide bridges follow: Cys3–Cys24, Cys17–Cys41, Cys43–Cys54, and Cys55–Cys60.

This sequence belongs to the three-finger toxin family. Short-chain subfamily. Type I alpha-neurotoxin sub-subfamily. As to expression, expressed by the venom gland.

It is found in the secreted. Binds to muscle nicotinic acetylcholine receptor (nAChR) and inhibit acetylcholine from binding to the receptor, thereby impairing neuromuscular transmission. The chain is Short neurotoxin 3 from Naja mossambica (Mozambique spitting cobra).